Consider the following 258-residue polypeptide: Ribonuclease PH (258 aa).

Residues Arg-86 and 124 to 126 contribute to the phosphate site; that span reads GTR.

The protein belongs to the RNase PH family. Homohexameric ring arranged as a trimer of dimers.

It carries out the reaction tRNA(n+1) + phosphate = tRNA(n) + a ribonucleoside 5'-diphosphate. Functionally, phosphorolytic 3'-5' exoribonuclease that plays an important role in tRNA 3'-end maturation. Removes nucleotide residues following the 3'-CCA terminus of tRNAs; can also add nucleotides to the ends of RNA molecules by using nucleoside diphosphates as substrates, but this may not be physiologically important. Probably plays a role in initiation of 16S rRNA degradation (leading to ribosome degradation) during starvation. This is Ribonuclease PH from Caldicellulosiruptor saccharolyticus (strain ATCC 43494 / DSM 8903 / Tp8T 6331).